The primary structure comprises 622 residues: Sodium/potassium/calcium exchanger 4 (622 aa).

A signal peptide spans 1–38 (MALRGLIRQSKVRRRREMLPQQVGFVCAVLALVCCASG). Topologically, residues 39 to 97 (LFGSLGHKTASAGKHVLLDTWRNRKLMAPINGTPLAKNCTDPAIHEFPTDLFSNKERQH) are extracellular. Asparagine 76 carries N-linked (GlcNAc...) asparagine glycosylation. A helical transmembrane segment spans residues 98–118 (GAVLLHILGALYMFYALAIVC). The Cytoplasmic segment spans residues 119-142 (DDFFVPSLEKICEKLHLSEDVAGA). Residues 139 to 179 (VAGATFMAAGSSTPELFASVIGVFITHGDVGVGTIVGSAVF) form an Alpha-1 repeat. The helical transmembrane segment at 143 to 163 (TFMAAGSSTPELFASVIGVFI) threads the bilayer. Topologically, residues 164 to 172 (THGDVGVGT) are extracellular. Residues 173–193 (IVGSAVFNILCIIGVCGLFAG) traverse the membrane as a helical segment. Over 194-200 (QVVRLTW) the chain is Cytoplasmic. Residues 201–221 (WAVCRDSVYYTLSVIVLIAFI) form a helical membrane-spanning segment. The Extracellular segment spans residues 222–224 (YDE). Residues 225-245 (EIVWWEGLVLIILYVFYILIM) form a helical membrane-spanning segment. At 246–457 (KYNMKMQTFF…RWEKFFMVTF (212 aa)) the chain is on the cytoplasmic side. The interval 358–408 (ANGVNSKPLQNGRHENMENGNVPVENPEDPQQGQEQQPPPQPPPPEPESVE) is disordered. Residues 394-404 (QPPPQPPPPEP) are compositionally biased toward pro residues. Residues 458–478 (ITATLWIAVFSYLMVWLVTII) traverse the membrane as a helical segment. Residue glycine 479 is a topological domain, extracellular. Residues 480 to 500 (YTLGIPDVIMGITFLAAGTSV) traverse the membrane as a helical segment. The Alpha-2 repeat unit spans residues 495–526 (AAGTSVPDCMASLIVARQGLGDMAVSNTIGSN). The Cytoplasmic portion of the chain corresponds to 501–526 (PDCMASLIVARQGLGDMAVSNTIGSN). Residues 527–547 (VFDILVGLGIPWGLQTMVINY) form a helical membrane-spanning segment. The Extracellular portion of the chain corresponds to 548–557 (GSTVKINSRG). The chain crosses the membrane as a helical span at residues 558-578 (LVYSVVLLLGSVALTVLGIHL). The Cytoplasmic segment spans residues 579-586 (NKWRLDRK). The chain crosses the membrane as a helical span at residues 587 to 607 (LGIYVLVLYAVFLCFSIMIEF). Over 608-622 (NVFTFVNLPMCREDD) the chain is Extracellular.

The protein belongs to the Ca(2+):cation antiporter (CaCA) (TC 2.A.19) family. SLC24A subfamily. As to expression, expressed in late secretory-stage and maturation-stage ameloblasts, with significantly increased expression during the late stages of amelogenesis (at protein level). Widely expressed in most regions of the brain, including hippocampus, neocortex, thalamus, striatum and olfactory bulb. Expressed in the olfactory sensory neurons.

It is found in the cell membrane. It localises to the cytoplasm. The catalysed reaction is Ca(2+)(out) + K(+)(out) + 4 Na(+)(in) = Ca(2+)(in) + K(+)(in) + 4 Na(+)(out). Calcium, potassium:sodium antiporter that transports 1 Ca(2+) and 1 K(+) in exchange for 4 Na(+). Controls the rapid response termination and proper regulation of adaptation in olfactory sensory neurons (OSNs) which subsequently influences how odor information is encoded and perceived. May play a role in calcium transport during amelogenesis. The sequence is that of Sodium/potassium/calcium exchanger 4 from Mus musculus (Mouse).